Reading from the N-terminus, the 256-residue chain is Necrosis-inducing protein NPP1 (256 aa).

Positions A111–G121 match the Conserved undecapeptide motif motif. A Conserved heptapeptide motif motif is present at residues G133–E139.

The protein belongs to the Necrosis inducing protein (NPP1) family.

It is found in the secreted. Its function is as follows. Secreted effector that acts as a pathogen-associated molecular pattern (PAMP) recognized by the plant immune system. The chain is Necrosis-inducing protein NPP1 from Phytophthora cinnamomi (Cinnamon fungus).